Here is a 418-residue protein sequence, read N- to C-terminus: Deubiquitinase and deneddylase Dub1 (418 aa).

Residues 1–10 (MLSPTNSISK) are compositionally biased toward polar residues. A disordered region spans residues 1-23 (MLSPTNSISKTAPVPPQDSSKPV). A helical membrane pass occupies residues 40–60 (TALAVLLVVVTLGLILLFYSF). A disordered region spans residues 72-144 (TRPSTKEQPT…PLPPKAPKPV (73 aa)). Residues 86–141 (VPLPSPPLAVPRPSTPPPPVISRPSTPPAPTPAISPPSTPSAPKPSTPPPLPPKAP) are compositionally biased toward pro residues. Residues His288, Asp305, and Cys358 contribute to the active site.

This sequence belongs to the peptidase C48 family.

It is found in the secreted. It localises to the host cell. The protein localises to the membrane. Its function is as follows. Effector proteins function to alter host cell physiology and promote bacterial survival in host tissues. This protease possesses deubiquitinating and deneddylating activities. The sequence is that of Deubiquitinase and deneddylase Dub1 (cdu1) from Chlamydia trachomatis serovar B (strain TZ1A828/OT).